Reading from the N-terminus, the 313-residue chain is Dehydrogenase/reductase SDR family member 1 (313 aa).

Ile19 contributes to the NAD(+) binding site. Omega-N-methylarginine is present on Arg21. Asp64 is a binding site for NAD(+). Residue Ser151 coordinates substrate. Positions 163, 167, and 198 each coordinate NAD(+). The active-site Proton acceptor is Tyr163.

Belongs to the short-chain dehydrogenases/reductases (SDR) family.

Its subcellular location is the endoplasmic reticulum. The catalysed reaction is 17alpha-estradiol + NADP(+) = estrone + NADPH + H(+). The enzyme catalyses testosterone + NADP(+) = androst-4-ene-3,17-dione + NADPH + H(+). It catalyses the reaction prostaglandin E1 + NADPH + H(+) = prostaglandin F1 + NADP(+). It carries out the reaction isatin + NADPH + H(+) = 3-hydroxyindolin-2-one + NADP(+). Its function is as follows. NADPH-dependent oxidoreductase which catalyzes the reduction of some steroids (estrone, androstene-3,17-dione and cortisone) as well as prostaglandin E1, isatin and xenobiotics in vitro. May have a role in steroid and/or xenobiotic metabolism. The sequence is that of Dehydrogenase/reductase SDR family member 1 from Mus musculus (Mouse).